Here is a 65-residue protein sequence, read N- to C-terminus: Large ribosomal subunit protein bL35 (65 aa).

Residues 1-11 are compositionally biased toward basic residues; the sequence is MPKIKTRRSAA. Disordered regions lie at residues 1-24 and 41-65; these read MPKIKTRRSAAKRFSVTGSGKFKR and RMRLGQSATVDSTNEKAVRRMMPYA.

Belongs to the bacterial ribosomal protein bL35 family.

In Nitratidesulfovibrio vulgaris (strain DSM 19637 / Miyazaki F) (Desulfovibrio vulgaris), this protein is Large ribosomal subunit protein bL35.